A 345-amino-acid chain; its full sequence is uncharacterized protein (345 aa).

Its subcellular location is the cell membrane. In terms of biological role, involved in potassium and divalent cation transport. Enhances the transport activity of the cation/potassium transporter CzcD. This is an uncharacterized protein from Bacillus subtilis (strain 168).